Here is a 128-residue protein sequence, read N- to C-terminus: UPF0325 protein YaeH (128 aa).

Belongs to the UPF0325 family.

The protein is UPF0325 protein YaeH of Shigella boydii serotype 18 (strain CDC 3083-94 / BS512).